The chain runs to 274 residues: Dermonecrotic toxin SdSicTox-betaIIB1ai (274 aa).

Residue His-5 is part of the active site. 2 residues coordinate Mg(2+): Glu-25 and Asp-27. His-41 (nucleophile) is an active-site residue. 2 disulfide bridges follow: Cys-45–Cys-51 and Cys-47–Cys-190. A Mg(2+)-binding site is contributed by Asp-85.

It belongs to the arthropod phospholipase D family. Class II subfamily. Mg(2+) serves as cofactor. Expressed by the venom gland.

It is found in the secreted. It carries out the reaction an N-(acyl)-sphingosylphosphocholine = an N-(acyl)-sphingosyl-1,3-cyclic phosphate + choline. The enzyme catalyses an N-(acyl)-sphingosylphosphoethanolamine = an N-(acyl)-sphingosyl-1,3-cyclic phosphate + ethanolamine. It catalyses the reaction a 1-acyl-sn-glycero-3-phosphocholine = a 1-acyl-sn-glycero-2,3-cyclic phosphate + choline. The catalysed reaction is a 1-acyl-sn-glycero-3-phosphoethanolamine = a 1-acyl-sn-glycero-2,3-cyclic phosphate + ethanolamine. In terms of biological role, dermonecrotic toxins cleave the phosphodiester linkage between the phosphate and headgroup of certain phospholipids (sphingolipid and lysolipid substrates), forming an alcohol (often choline) and a cyclic phosphate. This toxin acts on sphingomyelin (SM). It may also act on ceramide phosphoethanolamine (CPE), lysophosphatidylcholine (LPC) and lysophosphatidylethanolamine (LPE), but not on lysophosphatidylserine (LPS), and lysophosphatidylglycerol (LPG). It acts by transphosphatidylation, releasing exclusively cyclic phosphate products as second products. Induces dermonecrosis, hemolysis, increased vascular permeability, edema, inflammatory response, and platelet aggregation. The sequence is that of Dermonecrotic toxin SdSicTox-betaIIB1ai from Sicarius cf. damarensis (strain GJB-2008) (Six-eyed sand spider).